We begin with the raw amino-acid sequence, 716 residues long: Radial spoke head protein 4 homolog A (716 aa).

Disordered regions lie at residues 1–164, 375–410, 506–526, and 697–716; these read MEDS…CGRR, EGEDEEEVEEEDVAEERDNGESEAHEDEEDELPKSF, GEEEGEEEEEAEGGRNSFEEN, and LLAAENEESEEDEDEEDDYD. Positions 8–25 are enriched in basic and acidic residues; that stretch reads KQEKENQEELGETRRPWE. 3 stretches are compositionally biased toward low complexity: residues 29-42, 54-66, and 80-100; these read AASPQYSEPESSEP, QSRSSRPWSPQSR, and SSPAPVSPREPSSSPSPLAPA. Residues 140-156 show a composition bias toward polar residues; sequence HHTSQSEGNTFQQSQQP. A compositionally biased stretch (acidic residues) spans 375–389; sequence EGEDEEEVEEEDVAE. Residue S396 is modified to Phosphoserine. 2 stretches are compositionally biased toward acidic residues: residues 506–516 and 701–716; these read GEEEGEEEEEA and ENEESEEDEDEEDDYD.

Belongs to the flagellar radial spoke RSP4/6 family. Interacts with RSPH6A. Expressed in trachea, lungs, and testes. Very strong expression is detected in nasal brushings.

The protein localises to the cytoplasm. The protein resides in the cytoskeleton. Its subcellular location is the cilium axoneme. It localises to the cell projection. It is found in the cilium. Functionally, component of the axonemal radial spoke head which plays an important role in ciliary motility. Essential for triplet radial spokes (RS1, RS2 and RS3) head assembly in the motile cilia. The polypeptide is Radial spoke head protein 4 homolog A (RSPH4A) (Homo sapiens (Human)).